Consider the following 152-residue polypeptide: Transcriptional repressor NrdR (152 aa).

Residues 3–34 (CPFCNHGELKVIDSRNAPEANAIKRRRECLNC) fold into a zinc finger. The ATP-cone domain occupies 48-138 (LQVLKRDGRY…VYRRFKDVGE (91 aa)).

It belongs to the NrdR family. Zn(2+) is required as a cofactor.

Functionally, negatively regulates transcription of bacterial ribonucleotide reductase nrd genes and operons by binding to NrdR-boxes. The polypeptide is Transcriptional repressor NrdR (Chlamydia abortus (strain DSM 27085 / S26/3) (Chlamydophila abortus)).